A 1488-amino-acid chain; its full sequence is Calmodulin binding protein PICBP (1488 aa).

Disordered stretches follow at residues 1-31, 63-112, 280-329, and 378-414; these read MSNP…RKMW, TAES…SRIS, GPLG…GRSS, and HDHD…EEDG. Positions 18–31 are enriched in basic residues; the sequence is SSRRVHKRRERKMW. The span at 76–86 shows a compositional bias: basic and acidic residues; it reads DDSRTYSKSSD. The segment covering 98 to 107 has biased composition (basic residues); the sequence is SVKRRAKSKS. The span at 297–312 shows a compositional bias: acidic residues; that stretch reads DNVDGDSDEEVFEEEV. Calmodulin-binding stretches follow at residues 493–592 and 831–938; these read TFHM…SLIP and NSLK…DIVL. Disordered stretches follow at residues 816–844 and 941–971; these read IPDS…GETK and HDTP…EGCE. 2 stretches are compositionally biased toward basic and acidic residues: residues 833-844 and 954-971; these read LKEEKEHQGETK and RNND…EGCE. The segment at 1135 to 1229 is calmodulin-binding; it reads EKRVKGWNNV…SLLAQAFDTI (95 aa). Disordered stretches follow at residues 1232–1252 and 1316–1340; these read QDMG…ISRQ and EKNQ…DTSV. The segment covering 1235–1252 has biased composition (low complexity); the sequence is GSGSTPGSAASSRNISRQ. Over residues 1316-1328 the composition is skewed to basic and acidic residues; that stretch reads EKNQTLPEETRKE. Residues 1379–1483 are calmodulin-binding; that stretch reads RQKSETLQVS…QLLVQAFESL (105 aa).

In terms of biological role, binds calmodulin in a calcium-dependent manner in vitro. May play a role in general plant defense including R gene-mediated responses. This is Calmodulin binding protein PICBP from Arabidopsis thaliana (Mouse-ear cress).